The primary structure comprises 558 residues: MLLKSLALIASSSLAATFNIGDDLFADPQFTVQFHNRPLRQADVQNGLLPHRDPVYGHPLGYEMMQFNGTNHICGIPEVTTTKSSKSREEGELSPTEARDRALELMLPLLGDCLFYEQGFFSYRFCYGSGVVQYRRHGDNYFPRIYPPPQADDSPTFVLGSFEKDDTTNTVTSAGGIPFLAHRLRSGTHCPLTGANREIEVQFVCDKNVQHDHILWIKEKRTCNYVMQVGTPRLCKDMRFQPPPDESLPIMCYSVESEAPEFETIDGMFDGVAHVKEEQEAVSARAHQFVGSNVNKDKIDEIEVAWRFTKARALNYIGVWLGDCVNRQTLFKELGIATPSHDAPFIIQTRSMFVPAPINRHFEVRLMITRQQLLLSINDDDVTLEEKYAWWQEQGDMSNLEIQGLTMLDDAGIEDVLARATDEVMKQLNKEAKQSKKLAKKKEAASTKREEAKKQVEASVEEKAVDSAEDDGTDTVTSTQTFFRTQTLSTAEAESKQMPDKAEEDEDEDLIVTMYFEDGEFKIEGFEVADFEGVKSAMKDLADKEDDDDDYEDYGLSD.

An N-terminal signal peptide occupies residues 1 to 17 (MLLKSLALIASSSLAAT). N68 is a glycosylation site (N-linked (GlcNAc...) asparagine). An MRH domain is found at 111–237 (GDCLFYEQGF…QVGTPRLCKD (127 aa)). A disulfide bond links C113 and C126. 4 residues coordinate a mannooligosaccharide derivative: Q133, R197, E219, and Y225. 2 disulfides stabilise this stretch: C190–C223 and C205–C235. 2 disordered regions span residues 435–508 (SKKL…DEDE) and 539–558 (KDLA…GLSD). Residues 441-466 (KKEAASTKREEAKKQVEASVEEKAVD) are compositionally biased toward basic and acidic residues. Polar residues predominate over residues 474–492 (DTVTSTQTFFRTQTLSTAE). The segment covering 543–558 (DKEDDDDDYEDYGLSD) has biased composition (acidic residues).

The protein belongs to the OS-9 family. As to quaternary structure, interacts with missfolded ER lumenal proteins.

It is found in the endoplasmic reticulum membrane. Its function is as follows. Lectin involved in the quality control of the secretory pathway. As a member of the endoplasmic reticulum-associated degradation lumenal (ERAD-L) surveillance system, targets misfolded endoplasmic reticulum lumenal glycoproteins for degradation. The sequence is that of Protein OS-9 homolog (YOS9) from Yarrowia lipolytica (strain CLIB 122 / E 150) (Yeast).